Consider the following 49-residue polypeptide: U3-plectoxin-Pt1a (49 aa).

Cystine bridges form between Cys2/Cys16, Cys9/Cys30, Cys15/Cys41, Cys32/Cys39, and Cys45/Cys49.

Expressed by the venom gland.

It localises to the secreted. Its function is as follows. Potent toxin that may paralyze and/or kill insect pests such as H.virescens (lepidoptera), S.exigua (beet armyworm) and M.sexta (tobacco hornworm). This chain is U3-plectoxin-Pt1a, found in Plectreurys tristis (Spider).